The following is a 327-amino-acid chain: Tetraacyldisaccharide 4'-kinase (327 aa).

54-61 provides a ligand contact to ATP; it reads TTGGTGKT. The interval 78-106 is disordered; the sequence is PHILSRGHGGRERGPIGVNPNRSTPRDVG.

This sequence belongs to the LpxK family.

It carries out the reaction a lipid A disaccharide + ATP = a lipid IVA + ADP + H(+). It participates in glycolipid biosynthesis; lipid IV(A) biosynthesis; lipid IV(A) from (3R)-3-hydroxytetradecanoyl-[acyl-carrier-protein] and UDP-N-acetyl-alpha-D-glucosamine: step 6/6. In terms of biological role, transfers the gamma-phosphate of ATP to the 4'-position of a tetraacyldisaccharide 1-phosphate intermediate (termed DS-1-P) to form tetraacyldisaccharide 1,4'-bis-phosphate (lipid IVA). The polypeptide is Tetraacyldisaccharide 4'-kinase (Gluconobacter oxydans (strain 621H) (Gluconobacter suboxydans)).